The primary structure comprises 214 residues: Ependymin (214 aa).

Positions 1–20 are cleaved as a signal peptide; it reads MHTVKLLCVVFSCLCAVAWA. 2 N-linked (GlcNAc...) asparagine glycosylation sites follow: Asn-70 and Asn-93.

The protein belongs to the ependymin family. As to quaternary structure, forms disulfide-linked dimers. Binds calcium through the terminal sialic acids.

The protein resides in the secreted. Functionally, may play a role in neural plasticity. May be involved during axon regeneration. This Notemigonus crysoleucas (Golden shiner) protein is Ependymin (epd).